The primary structure comprises 197 residues: Peptidyl-tRNA hydrolase (197 aa).

Tyrosine 18 serves as a coordination point for tRNA. The active-site Proton acceptor is the histidine 23. The tRNA site is built by phenylalanine 69, asparagine 71, and asparagine 117.

The protein belongs to the PTH family. As to quaternary structure, monomer.

It localises to the cytoplasm. The catalysed reaction is an N-acyl-L-alpha-aminoacyl-tRNA + H2O = an N-acyl-L-amino acid + a tRNA + H(+). Its function is as follows. Hydrolyzes ribosome-free peptidyl-tRNAs (with 1 or more amino acids incorporated), which drop off the ribosome during protein synthesis, or as a result of ribosome stalling. Functionally, catalyzes the release of premature peptidyl moieties from peptidyl-tRNA molecules trapped in stalled 50S ribosomal subunits, and thus maintains levels of free tRNAs and 50S ribosomes. This is Peptidyl-tRNA hydrolase from Psychromonas ingrahamii (strain DSM 17664 / CCUG 51855 / 37).